The sequence spans 114 residues: Late cornified envelope protein 1D (114 aa).

The segment covering 1–10 has biased composition (low complexity); the sequence is MSCQQSQQQC. Disordered regions lie at residues 1 to 21 and 75 to 114; these read MSCQ…PKCT and HHRR…GGCC. A compositionally biased stretch (basic residues) spans 75 to 86; the sequence is HHRRHRSHRRRP. A compositionally biased stretch (low complexity) spans 88–99; sequence SSDCCSQPSGGS.

Belongs to the LCE family. In terms of assembly, interacts with CYSRT1. In terms of tissue distribution, skin-specific. Expression was readily detected in adult trunk skin, adult arm skin, fetal skin, penal skin, vulva, esophagus and tongue. Not expressed in the cervix, rectum, lung, colon, or placenta.

Precursors of the cornified envelope of the stratum corneum. The sequence is that of Late cornified envelope protein 1D (LCE1D) from Homo sapiens (Human).